The following is a 269-amino-acid chain: tRNA pseudouridine synthase A (269 aa).

Residue aspartate 51 is the Nucleophile of the active site. A substrate-binding site is contributed by tyrosine 109.

Belongs to the tRNA pseudouridine synthase TruA family. In terms of assembly, homodimer.

It catalyses the reaction uridine(38/39/40) in tRNA = pseudouridine(38/39/40) in tRNA. In terms of biological role, formation of pseudouridine at positions 38, 39 and 40 in the anticodon stem and loop of transfer RNAs. This Histophilus somni (strain 2336) (Haemophilus somnus) protein is tRNA pseudouridine synthase A.